The chain runs to 270 residues: 3-methyl-2-oxobutanoate hydroxymethyltransferase (270 aa).

Mg(2+) is bound by residues Asp-50 and Asp-89. Residues 50–51 (DS), Asp-89, and Lys-118 each bind 3-methyl-2-oxobutanoate. Glu-120 contributes to the Mg(2+) binding site. Catalysis depends on Glu-187, which acts as the Proton acceptor.

This sequence belongs to the PanB family. In terms of assembly, homodecamer; pentamer of dimers. The cofactor is Mg(2+).

Its subcellular location is the cytoplasm. It carries out the reaction 3-methyl-2-oxobutanoate + (6R)-5,10-methylene-5,6,7,8-tetrahydrofolate + H2O = 2-dehydropantoate + (6S)-5,6,7,8-tetrahydrofolate. The protein operates within cofactor biosynthesis; (R)-pantothenate biosynthesis; (R)-pantoate from 3-methyl-2-oxobutanoate: step 1/2. Its function is as follows. Catalyzes the reversible reaction in which hydroxymethyl group from 5,10-methylenetetrahydrofolate is transferred onto alpha-ketoisovalerate to form ketopantoate. In Helicobacter pylori (strain HPAG1), this protein is 3-methyl-2-oxobutanoate hydroxymethyltransferase.